A 1370-amino-acid chain; its full sequence is MDPSDFPSPFDPLTLPEKPLAGDLPVDMEFGEDLLESQTAPTRGWAPPGPSPSSGALDLLDTPAGLEKDPGVLDGATELLGLGGLLYKAPSPPEVDHGPEGTLAWDAGDQTLEPGPGGQTPEVVPPDPGAGANSCSPEGLLEPLAPDSPITLQSPHIEEEETTSIATARRGSPGQEEELPQGQPQSPNAPPSPSVGETLGDGINSSQTKPGGSSPPAHPSLPGDGLTAKASEKPPERKRSERVRRAEPPKPEVVDSTESIPVSDEDSDAMVDDPNDEDFVPFRPRRSPRMSLRSSVSQRAGRSAVGTKMTCAHCRTPLQKGQTAYQRKGLPQLFCSSSCLTTFSKKPSGKKTCTFCKKEIWNTKDSVVAQTGSGGSFHEFCTSVCLSLYEAQQQRPIPQSGDPADATRCSICQKTGEVLHEVSNGSVVHRLCSDSCFSKFRANKGLKTNCCDQCGAYIYTKTGSPGPELLFHEGQQKRFCNTTCLGAYKKKNTRVYPCVWCKTLCKNFEMLSHVDRNGKTSLFCSLCCTTSYKVKQAGLTGPPRPCSFCRRSLSDPCYYNKVDRTVYQFCSPSCWTKFQRTSPEGGIHLSCHYCHSLFSGKPEVLDWQDQVFQFCCRDCCEDFKRLRGVVSQCEHCRQEKLLHEKLRFSGVEKSFCSEGCVLLYKQDFTKKLGLCCITCTYCSQTCQRGVTEQLDGSTWDFCSEDCKSKYLLWYCKAARCHACKRQGKLLETIHWRGQIRHFCNQQCLLRFYSQQNQPNLDTQSGPESLLNSQSPESKPQTPSQTKVENSNTVRTPEENGNLGKIPVKTRSAPTAPTPPPPPPPATPRKNKAAMCKPLMQNRGVSCKVEMKSKGSQTEEWKPQVIVLPIPVPIFVPVPMHLYCQKVPVPFSMPIPVPVPMFLPTTLESTDKIVETIEELKVKIPSNPLEADILAMAEMIAEAEELDKASSDLCDLVSNQSAEGLLEDCDLFGPARDDVLAMAVKMANVLDEPGQDLEADFPKNPLDINPSVDFLFDCGLVGPEDVSTEQDLPRTMRKGQKRLVLSESCSRDSMSSQPSCTGLNYSYGVNAWKCWVQSKYANGETSKGDELRFGPKPMRIKEDILACSAAELNYGLAQFVREITRPNGERYEPDSIYYLCLGIQQYLLENNRMVNIFTDLYYLTFVQELNKSLSTWQPTLLPNNTVFSRVEEEHLWECKQLGVYSPFVLLNTLMFFNTKFFGLQTAEEHMQLSFTNVVRQSRKCTTPRGTTKVVSIRYYAPVRQRKGRDTGPGKRKREDEAPILEQRENRMNPLRCPVKFYEFYLSKCPESLRTRNDVFYLQPERSCIAESPLWYSVIPMDRSMLESMLNRILAVREIYEELGRPGEEDLD.

2 stretches are compositionally biased toward low complexity: residues 1–12 and 52–61; these read MDPSDFPSPFDP and PSSGALDLLD. 2 disordered regions span residues 1 to 72 and 90 to 301; these read MDPS…DPGV and PSPP…QRAG. Residues 230-253 are compositionally biased toward basic and acidic residues; sequence ASEKPPERKRSERVRRAEPPKPEV. 2 positions are modified to phosphoserine: Ser-263 and Ser-267. The span at 263–279 shows a compositional bias: acidic residues; sequence SDEDSDAMVDDPNDEDF. Glycyl lysine isopeptide (Lys-Gly) (interchain with G-Cter in SUMO2) cross-links involve residues Lys-308, Lys-320, and Lys-328. 9 consecutive MYM-type zinc fingers follow at residues 332-366, 378-422, 429-464, 477-511, 521-559, 567-604, 612-646, 653-692, and 699-733; these read QLFC…TKDS, HEFC…LHEV, HRLC…KTGS, KRFC…FEML, SLFC…PCYY, YQFC…KPEV, FQFC…HEKL, KSFC…GVTE, and WDFC…LETI. A Phosphoserine modification is found at Ser-464. Positions 759–794 are enriched in polar residues; sequence NLDTQSGPESLLNSQSPESKPQTPSQTKVENSNTVR. The interval 759–830 is disordered; it reads NLDTQSGPES…PPPPATPRKN (72 aa). Glycyl lysine isopeptide (Lys-Gly) (interchain with G-Cter in SUMO2) cross-links involve residues Lys-778 and Lys-786. Residue Thr-795 is modified to Phosphothreonine. A Glycyl lysine isopeptide (Lys-Gly) (interchain with G-Cter in SUMO2) cross-link involves residue Lys-804. Positions 815–826 are enriched in pro residues; sequence APTPPPPPPPAT. Residues Thr-817 and Thr-826 each carry the phosphothreonine modification. Glycyl lysine isopeptide (Lys-Gly) (interchain with G-Cter in SUMO2) cross-links involve residues Lys-847, Lys-861, Lys-920, and Lys-1275.

In terms of assembly, may be a component of a BHC histone deacetylase complex that contains HDAC1, HDAC2, HMG20B/BRAF35, KDM1A, RCOR1/CoREST, PHF21A/BHC80, ZMYM2, ZNF217, ZMYM3, GSE1 and GTF2I. Most abundant in brain, moderate in muscle and heart, low in other tissues except placenta.

It is found in the nucleus. Functionally, plays a role in the regulation of cell morphology and cytoskeletal organization. This is Zinc finger MYM-type protein 3 (ZMYM3) from Homo sapiens (Human).